Here is a 70-residue protein sequence, read N- to C-terminus: Cytoinsectotoxin-2c (70 aa).

It belongs to the cationic peptide 06 (cytoinsectotoxin) family. As to expression, expressed by the venom gland.

The protein localises to the secreted. In terms of biological role, insecticidal and antimicrobial peptide. Has insecticidal activity against larvae of flesh fly S.carnaria. Has antibacterial activity against Gram-positive bacterium B.subtilis B-501 (MIC=1.25 uM) and Gram-negative bacterium E.coli DH5alpha (MIC=2.5 uM). The sequence is that of Cytoinsectotoxin-2c from Lachesana tarabaevi (Spider).